A 471-amino-acid polypeptide reads, in one-letter code: Uronate isomerase (471 aa).

Belongs to the metallo-dependent hydrolases superfamily. Uronate isomerase family.

The enzyme catalyses D-glucuronate = D-fructuronate. It catalyses the reaction aldehydo-D-galacturonate = keto-D-tagaturonate. The protein operates within carbohydrate metabolism; pentose and glucuronate interconversion. In Latilactobacillus sakei subsp. sakei (strain 23K) (Lactobacillus sakei subsp. sakei), this protein is Uronate isomerase.